The primary structure comprises 1093 residues: Mediator of RNA polymerase II transcription subunit 14 (1093 aa).

Disordered stretches follow at residues 1–62 and 1034–1065; these read MPGV…IDGH and ETKS…ANDT. The segment covering 19–31 has biased composition (polar residues); it reads DTQTPSNGDNLRN. Residues 41 to 62 are compositionally biased toward basic and acidic residues; it reads KGDKDHDPDKESYAGKPRIDGH. Over residues 1040–1056 the composition is skewed to polar residues; the sequence is DYSTQPAPENQSQTGAP.

Belongs to the Mediator complex subunit 14 family. Component of the Mediator complex.

The protein localises to the nucleus. Component of the Mediator complex, a coactivator involved in the regulated transcription of nearly all RNA polymerase II-dependent genes. Mediator functions as a bridge to convey information from gene-specific regulatory proteins to the basal RNA polymerase II transcription machinery. Mediator is recruited to promoters by direct interactions with regulatory proteins and serves as a scaffold for the assembly of a functional preinitiation complex with RNA polymerase II and the general transcription factors. The protein is Mediator of RNA polymerase II transcription subunit 14 (rgr1) of Aspergillus fumigatus (strain ATCC MYA-4609 / CBS 101355 / FGSC A1100 / Af293) (Neosartorya fumigata).